The primary structure comprises 320 residues: ATP-dependent 6-phosphofructokinase (320 aa).

An ATP-binding site is contributed by G12. An ADP-binding site is contributed by 22–26 (RGVVR). Residues 73-74 (RF) and 103-106 (GDGS) contribute to the ATP site. A Mg(2+)-binding site is contributed by D104. Substrate is bound at residue 126–128 (TID). D128 functions as the Proton acceptor in the catalytic mechanism. Residue R155 coordinates ADP. Substrate is bound by residues R163 and 170–172 (MGR). ADP is bound by residues 186-188 (GCE), K212, and 214-216 (KKH). Substrate-binding positions include E223, R244, and 250–253 (HIQR).

It belongs to the phosphofructokinase type A (PFKA) family. ATP-dependent PFK group I subfamily. Prokaryotic clade 'B1' sub-subfamily. Homotetramer. The cofactor is Mg(2+).

Its subcellular location is the cytoplasm. The enzyme catalyses beta-D-fructose 6-phosphate + ATP = beta-D-fructose 1,6-bisphosphate + ADP + H(+). It participates in carbohydrate degradation; glycolysis; D-glyceraldehyde 3-phosphate and glycerone phosphate from D-glucose: step 3/4. Allosterically activated by ADP and other diphosphonucleosides, and allosterically inhibited by phosphoenolpyruvate. In terms of biological role, catalyzes the phosphorylation of D-fructose 6-phosphate to fructose 1,6-bisphosphate by ATP, the first committing step of glycolysis. The chain is ATP-dependent 6-phosphofructokinase from Aliivibrio fischeri (strain ATCC 700601 / ES114) (Vibrio fischeri).